A 150-amino-acid chain; its full sequence is Large ribosomal subunit protein bL9 (150 aa).

It belongs to the bacterial ribosomal protein bL9 family.

Its function is as follows. Binds to the 23S rRNA. This chain is Large ribosomal subunit protein bL9, found in Ruthia magnifica subsp. Calyptogena magnifica.